Reading from the N-terminus, the 249-residue chain is 4-hydroxy-tetrahydrodipicolinate reductase (249 aa).

NAD(+) is bound by residues Asp32, 74 to 76, and 99 to 102; these read GTT and SANY. The Proton donor/acceptor role is filled by His134. His135 contacts (S)-2,3,4,5-tetrahydrodipicolinate. Catalysis depends on Lys138, which acts as the Proton donor. Residue 144-145 coordinates (S)-2,3,4,5-tetrahydrodipicolinate; that stretch reads GT.

Belongs to the DapB family.

The protein resides in the cytoplasm. The enzyme catalyses (S)-2,3,4,5-tetrahydrodipicolinate + NAD(+) + H2O = (2S,4S)-4-hydroxy-2,3,4,5-tetrahydrodipicolinate + NADH + H(+). The catalysed reaction is (S)-2,3,4,5-tetrahydrodipicolinate + NADP(+) + H2O = (2S,4S)-4-hydroxy-2,3,4,5-tetrahydrodipicolinate + NADPH + H(+). It functions in the pathway amino-acid biosynthesis; L-lysine biosynthesis via DAP pathway; (S)-tetrahydrodipicolinate from L-aspartate: step 4/4. Functionally, catalyzes the conversion of 4-hydroxy-tetrahydrodipicolinate (HTPA) to tetrahydrodipicolinate. The chain is 4-hydroxy-tetrahydrodipicolinate reductase from Chlorobaculum tepidum (strain ATCC 49652 / DSM 12025 / NBRC 103806 / TLS) (Chlorobium tepidum).